A 199-amino-acid chain; its full sequence is NADH-quinone oxidoreductase subunit I (199 aa).

4Fe-4S ferredoxin-type domains are found at residues 45-75 and 91-120; these read LNRHPDGLEKCIGCELCAWACPADAIYVEGA and RVYQINYLRCIFCGYCIEACPTRALTMSNE. The [4Fe-4S] cluster site is built by cysteine 55, cysteine 58, cysteine 61, cysteine 65, cysteine 100, cysteine 103, cysteine 106, and cysteine 110. The interval 164 to 199 is disordered; the sequence is GTPAAHMLSGEDDAASETTLDRSDDHSATYEEAERP. Residues 182-199 are compositionally biased toward basic and acidic residues; the sequence is TLDRSDDHSATYEEAERP.

It belongs to the complex I 23 kDa subunit family. In terms of assembly, NDH-1 is composed of 14 different subunits. Subunits NuoA, H, J, K, L, M, N constitute the membrane sector of the complex. The cofactor is [4Fe-4S] cluster.

The protein localises to the cell membrane. It carries out the reaction a quinone + NADH + 5 H(+)(in) = a quinol + NAD(+) + 4 H(+)(out). NDH-1 shuttles electrons from NADH, via FMN and iron-sulfur (Fe-S) centers, to quinones in the respiratory chain. The immediate electron acceptor for the enzyme in this species is believed to be ubiquinone. Couples the redox reaction to proton translocation (for every two electrons transferred, four hydrogen ions are translocated across the cytoplasmic membrane), and thus conserves the redox energy in a proton gradient. The protein is NADH-quinone oxidoreductase subunit I of Acidothermus cellulolyticus (strain ATCC 43068 / DSM 8971 / 11B).